A 401-amino-acid chain; its full sequence is Dual-specificity RNA methyltransferase RlmN (401 aa).

Catalysis depends on E114, which acts as the Proton acceptor. The 246-residue stretch at D120–D365 folds into the Radical SAM core domain. An intrachain disulfide couples C127 to C370. [4Fe-4S] cluster is bound by residues C134, C138, and C141. S-adenosyl-L-methionine is bound by residues G187–E188, S219, S241–H243, and N327. Catalysis depends on C370, which acts as the S-methylcysteine intermediate.

Belongs to the radical SAM superfamily. RlmN family. It depends on [4Fe-4S] cluster as a cofactor.

The protein resides in the cytoplasm. It carries out the reaction adenosine(2503) in 23S rRNA + 2 reduced [2Fe-2S]-[ferredoxin] + 2 S-adenosyl-L-methionine = 2-methyladenosine(2503) in 23S rRNA + 5'-deoxyadenosine + L-methionine + 2 oxidized [2Fe-2S]-[ferredoxin] + S-adenosyl-L-homocysteine. The catalysed reaction is adenosine(37) in tRNA + 2 reduced [2Fe-2S]-[ferredoxin] + 2 S-adenosyl-L-methionine = 2-methyladenosine(37) in tRNA + 5'-deoxyadenosine + L-methionine + 2 oxidized [2Fe-2S]-[ferredoxin] + S-adenosyl-L-homocysteine. Its function is as follows. Specifically methylates position 2 of adenine 2503 in 23S rRNA and position 2 of adenine 37 in tRNAs. m2A2503 modification seems to play a crucial role in the proofreading step occurring at the peptidyl transferase center and thus would serve to optimize ribosomal fidelity. The protein is Dual-specificity RNA methyltransferase RlmN of Stenotrophomonas maltophilia (strain R551-3).